Here is a 261-residue protein sequence, read N- to C-terminus: Prostate-specific antigen (261 aa).

An N-terminal signal peptide occupies residues 1-17; that stretch reads MWVPVVFLTLSVTWIGA. The propeptide at 18–24 is activation peptide; it reads APLILSR. In terms of domain architecture, Peptidase S1 spans 25 to 258; sequence IVGGWECEKH…YRKWIKDTIV (234 aa). Intrachain disulfides connect cysteine 31/cysteine 173, cysteine 50/cysteine 66, cysteine 152/cysteine 219, cysteine 184/cysteine 198, and cysteine 209/cysteine 234. The active-site Charge relay system is the histidine 65. Asparagine 69 carries an N-linked (GlcNAc...) asparagine glycan. Aspartate 120 (charge relay system) is an active-site residue. The active-site Charge relay system is serine 213.

This sequence belongs to the peptidase S1 family. Kallikrein subfamily. In terms of assembly, forms a heterodimer with SERPINA5.

It is found in the secreted. It carries out the reaction Preferential cleavage: -Tyr-|-Xaa-.. With respect to regulation, inhibited by SERPINA5. Activity is strongly inhibited by Zn2+, 100 times more abundant in semen than in serum. This inhibition is relieved by exposure to semenogelins, which are avid zinc binders. Functionally, hydrolyzes semenogelin-1 thus leading to the liquefaction of the seminal coagulum. The sequence is that of Prostate-specific antigen (KLK3) from Homo sapiens (Human).